A 590-amino-acid polypeptide reads, in one-letter code: CTP synthase (590 aa).

The segment at 1–281 is amidoligase domain; sequence MPALRKHPQT…DAYVVRRLNL (281 aa). Ser-23 provides a ligand contact to CTP. Ser-23 contributes to the UTP binding site. Residues 24–29 and Asp-81 contribute to the ATP site; that span reads SLGKGL. Mg(2+) contacts are provided by Asp-81 and Glu-155. Residues 162–164, 202–207, and Lys-238 each bind CTP; these read DIE and KTKPTQ. UTP is bound by residues 202–207 and Lys-238; that span reads KTKPTQ. Positions 306 to 554 constitute a Glutamine amidotransferase type-1 domain; that stretch reads RIALVGKYID…IGAAIDYKAA (249 aa). Gly-369 serves as a coordination point for L-glutamine. The Nucleophile; for glutamine hydrolysis role is filled by Cys-396. L-glutamine is bound by residues 397–400, Glu-419, and Arg-480; that span reads LGLQ. Residues His-527 and Glu-529 contribute to the active site.

It belongs to the CTP synthase family. In terms of assembly, homotetramer.

It carries out the reaction UTP + L-glutamine + ATP + H2O = CTP + L-glutamate + ADP + phosphate + 2 H(+). The catalysed reaction is L-glutamine + H2O = L-glutamate + NH4(+). It catalyses the reaction UTP + NH4(+) + ATP = CTP + ADP + phosphate + 2 H(+). The protein operates within pyrimidine metabolism; CTP biosynthesis via de novo pathway; CTP from UDP: step 2/2. Its activity is regulated as follows. Allosterically activated by GTP, when glutamine is the substrate; GTP has no effect on the reaction when ammonia is the substrate. The allosteric effector GTP functions by stabilizing the protein conformation that binds the tetrahedral intermediate(s) formed during glutamine hydrolysis. Inhibited by the product CTP, via allosteric rather than competitive inhibition. In terms of biological role, catalyzes the ATP-dependent amination of UTP to CTP with either L-glutamine or ammonia as the source of nitrogen. Regulates intracellular CTP levels through interactions with the four ribonucleotide triphosphates. The sequence is that of CTP synthase from Mycolicibacterium smegmatis (strain ATCC 700084 / mc(2)155) (Mycobacterium smegmatis).